We begin with the raw amino-acid sequence, 262 residues long: 5'-nucleotidase SurE (262 aa).

A divalent metal cation contacts are provided by Asp-13, Asp-14, Ser-44, and Asn-97.

Belongs to the SurE nucleotidase family. Requires a divalent metal cation as cofactor.

It localises to the cytoplasm. The catalysed reaction is a ribonucleoside 5'-phosphate + H2O = a ribonucleoside + phosphate. In terms of biological role, nucleotidase that shows phosphatase activity on nucleoside 5'-monophosphates. The sequence is that of 5'-nucleotidase SurE from Myxococcus xanthus (strain DK1622).